The following is a 224-amino-acid chain: UPF0111 protein CT_691 (224 aa).

It belongs to the UPF0111 family.

The sequence is that of UPF0111 protein CT_691 from Chlamydia trachomatis serovar D (strain ATCC VR-885 / DSM 19411 / UW-3/Cx).